The following is a 138-amino-acid chain: Putative pre-16S rRNA nuclease (138 aa).

This sequence belongs to the YqgF nuclease family.

It localises to the cytoplasm. In terms of biological role, could be a nuclease involved in processing of the 5'-end of pre-16S rRNA. In Salmonella dublin (strain CT_02021853), this protein is Putative pre-16S rRNA nuclease.